Consider the following 184-residue polypeptide: Probable gluconokinase (184 aa).

ATP is bound at residue 11–18 (GVSGSGKS).

This sequence belongs to the gluconokinase GntK/GntV family.

The enzyme catalyses D-gluconate + ATP = 6-phospho-D-gluconate + ADP + H(+). The protein operates within carbohydrate acid metabolism; D-gluconate degradation. This chain is Probable gluconokinase (Idnk), found in Mus musculus (Mouse).